The sequence spans 147 residues: Hemoglobin subunit gamma (147 aa).

The Globin domain occupies 3–147 (NFTAEDKAAI…VASALASRYH (145 aa)). Positions 64 and 93 each coordinate heme b.

Belongs to the globin family. As to quaternary structure, heterotetramer of two alpha chains and two gamma chains in fetal hemoglobin (Hb F). In terms of tissue distribution, red blood cells.

Gamma chains make up the fetal hemoglobin F, in combination with alpha chains. In Alouatta seniculus (Red howler monkey), this protein is Hemoglobin subunit gamma (HBG).